Consider the following 196-residue polypeptide: DnaA initiator-associating protein DiaA (196 aa).

In terms of domain architecture, SIS spans 34–196; sequence LVHSLLNGNK…DNTLFPHQDD (163 aa).

The protein belongs to the SIS family. DiaA subfamily. In terms of assembly, homotetramer; dimer of dimers.

Its function is as follows. Required for the timely initiation of chromosomal replication via direct interactions with the DnaA initiator protein. This Salmonella enteritidis PT4 (strain P125109) protein is DnaA initiator-associating protein DiaA.